Reading from the N-terminus, the 750-residue chain is Coiled-coil domain-containing protein 142 (750 aa).

The disordered stretch occupies residues 1–29 (MAQASRSGSLPPLVIVPPLRAQPGGTGEE). A coiled-coil region spans residues 87 to 110 (ALQRLRAVLLRLHREREQLLQARD). The segment at 687–714 (LEPPLQPGTSPAQTGQLQSTLGGRGPSP) is disordered. Residues 693–707 (PGTSPAQTGQLQSTL) show a composition bias toward polar residues.

The chain is Coiled-coil domain-containing protein 142 (CCDC142) from Homo sapiens (Human).